The following is a 68-amino-acid chain: Conotoxin PnMLKM-011 (68 aa).

The N-terminal stretch at 1–17 (MGVVLFIFLVLFPLATL) is a signal peptide. Positions 18 to 51 (QLDPDQPVERYAENKQLLNPDERRGIILHALGQR) are excised as a propeptide. 3 disulfide bridges follow: Cys53-Cys65, Cys54-Cys63, and Cys59-Cys66. Position 67 is a leucine amide (Leu67).

Belongs to the conotoxin M superfamily. Expressed by the venom duct.

Its subcellular location is the secreted. This chain is Conotoxin PnMLKM-011, found in Conus pennaceus (Feathered cone).